Reading from the N-terminus, the 120-residue chain is NAD(P)H-quinone oxidoreductase subunit 3 (120 aa).

Helical transmembrane passes span 10–32 (LLGF…KVLR), 64–84 (MFAL…PWAV), and 89–109 (LGVL…VGLV).

This sequence belongs to the complex I subunit 3 family. As to quaternary structure, NDH-1 can be composed of about 15 different subunits; different subcomplexes with different compositions have been identified which probably have different functions.

The protein resides in the cellular thylakoid membrane. It catalyses the reaction a plastoquinone + NADH + (n+1) H(+)(in) = a plastoquinol + NAD(+) + n H(+)(out). It carries out the reaction a plastoquinone + NADPH + (n+1) H(+)(in) = a plastoquinol + NADP(+) + n H(+)(out). Its function is as follows. NDH-1 shuttles electrons from an unknown electron donor, via FMN and iron-sulfur (Fe-S) centers, to quinones in the respiratory and/or the photosynthetic chain. The immediate electron acceptor for the enzyme in this species is believed to be plastoquinone. Couples the redox reaction to proton translocation, and thus conserves the redox energy in a proton gradient. Cyanobacterial NDH-1 also plays a role in inorganic carbon-concentration. This chain is NAD(P)H-quinone oxidoreductase subunit 3, found in Acaryochloris marina (strain MBIC 11017).